The primary structure comprises 277 residues: Thiazole synthase (277 aa).

Lysine 107 (schiff-base intermediate with DXP) is an active-site residue. 1-deoxy-D-xylulose 5-phosphate contacts are provided by residues glycine 168, 194 to 195 (AG), and 216 to 217 (AS).

It belongs to the ThiG family. In terms of assembly, homotetramer. Forms heterodimers with either ThiH or ThiS.

It localises to the cytoplasm. It carries out the reaction [ThiS sulfur-carrier protein]-C-terminal-Gly-aminoethanethioate + 2-iminoacetate + 1-deoxy-D-xylulose 5-phosphate = [ThiS sulfur-carrier protein]-C-terminal Gly-Gly + 2-[(2R,5Z)-2-carboxy-4-methylthiazol-5(2H)-ylidene]ethyl phosphate + 2 H2O + H(+). It functions in the pathway cofactor biosynthesis; thiamine diphosphate biosynthesis. Functionally, catalyzes the rearrangement of 1-deoxy-D-xylulose 5-phosphate (DXP) to produce the thiazole phosphate moiety of thiamine. Sulfur is provided by the thiocarboxylate moiety of the carrier protein ThiS. In vitro, sulfur can be provided by H(2)S. The chain is Thiazole synthase from Cutibacterium acnes (strain DSM 16379 / KPA171202) (Propionibacterium acnes).